The sequence spans 240 residues: Probable Ni/Fe-hydrogenase B-type cytochrome subunit (240 aa).

4 helical membrane-spanning segments follow: residues 31–51 (LWHW…YFIG), 75–95 (FAAG…AFVG), 142–163 (LAMF…FALY), and 196–213 (LGMW…YLAA).

It belongs to the HupC/HyaC/HydC family.

It localises to the cell membrane. In terms of biological role, probable b-type cytochrome. The polypeptide is Probable Ni/Fe-hydrogenase B-type cytochrome subunit (hupZ) (Azotobacter chroococcum mcd 1).